The primary structure comprises 134 residues: Small ribosomal subunit protein uS9 (134 aa).

The tract at residues 97–134 (ENRQDLKSCGFLTRDPRKKERKKYGHKKARKSFQFSKR) is disordered. Residues 115 to 134 (KERKKYGHKKARKSFQFSKR) are compositionally biased toward basic residues.

Belongs to the universal ribosomal protein uS9 family.

This chain is Small ribosomal subunit protein uS9 (rpsI), found in Chlamydia pneumoniae (Chlamydophila pneumoniae).